The chain runs to 775 residues: Zinc finger protein GLIS3 (775 aa).

Disordered regions lie at residues 121–147 (TESS…KKRA) and 282–314 (PGST…AHLH). The segment covering 123–133 (SSHSPYPSPRH) has biased composition (low complexity). Over residues 134–147 (SSTRSHSARSKKRA) the composition is skewed to basic residues. Residues 289–307 (PPAPPLPPLPPPPGPPPPY) show a composition bias toward pro residues. The C2H2-type 1 zinc finger occupies 345-370 (HCCRWIDCSALYDQQEELVRHIEKVH). A C2H2-type 2; atypical zinc finger spans residues 379-406 (FTCFWAGCPRRYKPFNARYKLLIHMRVH). 3 consecutive C2H2-type zinc fingers follow at residues 412-436 (NKCT…LRSH), 442-466 (YLCQ…QRTH), and 472-496 (YACQ…VKAH). Disordered stretches follow at residues 485-512 (DPSS…SSTE) and 529-665 (PATS…QPNG). The Bipartite nuclear localization signal signature appears at 491-507 (KHVKAHSSKEQQARKKL). The segment covering 497–512 (SSKEQQARKKLRSSTE) has biased composition (basic and acidic residues). 3 stretches are compositionally biased toward polar residues: residues 557 to 567 (IFSSNYSSRSG), 588 to 600 (VQGS…SQLP), and 632 to 663 (SILQ…SFQP).

This sequence belongs to the GLI C2H2-type zinc-finger protein family. As to expression, in the adult, expressed at high levels in the kidney and at lower levels in the brain, skeletal muscle, pancreas, liver, lung, thymus and ovary.

It is found in the nucleus. In terms of biological role, acts both as a repressor and an activator of transcription. Binds to the consensus sequence 5'-GACCACCCAC-3'. The sequence is that of Zinc finger protein GLIS3 (GLIS3) from Homo sapiens (Human).